We begin with the raw amino-acid sequence, 144 residues long: Hexon-interlacing protein (144 aa).

Positions 106–133 form a coiled coil; it reads LTVMLAKLETLTAQLEELSQKVEELADA.

This sequence belongs to the adenoviridae hexon-interlacing protein family. In terms of assembly, homotrimer. Interacts with hexon protein; this interaction tethers the hexons together. Self-interacts with adjacent proteins. Interacts with kinesin light chain KLC1; this interaction leads to capsid disruption at the nuclear pore complex during virus entry into host cell.

The protein localises to the virion. The protein resides in the host nucleus. Structural component of the virion that acts as a cement protein on the capsid exterior and forms triskelion structures consisting of three molecules that stabilize three hexon trimers at the center of each icosahedral facet and fixes the peripentonal hexons. Dispensable for assembly. During virus entry, recruits the anterograde motor kinesin-1 to the capsid docked at the nuclear pore complex thereby subjecting the docked capsid to a pulling force. The resulting tension leads to capsid disruption, dispersion of capsid fragments toward cell periphery and eventually viral DNA entry into the host nucleus. This chain is Hexon-interlacing protein, found in Homo sapiens (Human).